The sequence spans 210 residues: Glycerol-3-phosphate acyltransferase (210 aa).

The next 6 helical transmembrane spans lie at Leu-8–Thr-28, Gly-56–Ala-76, Thr-87–Phe-107, Thr-119–Ala-139, Ile-144–Ser-164, and Gly-165–Ala-185.

Belongs to the PlsY family. As to quaternary structure, probably interacts with PlsX.

Its subcellular location is the cell inner membrane. It catalyses the reaction an acyl phosphate + sn-glycerol 3-phosphate = a 1-acyl-sn-glycero-3-phosphate + phosphate. Its pathway is lipid metabolism; phospholipid metabolism. Catalyzes the transfer of an acyl group from acyl-phosphate (acyl-PO(4)) to glycerol-3-phosphate (G3P) to form lysophosphatidic acid (LPA). This enzyme utilizes acyl-phosphate as fatty acyl donor, but not acyl-CoA or acyl-ACP. This chain is Glycerol-3-phosphate acyltransferase, found in Gluconobacter oxydans (strain 621H) (Gluconobacter suboxydans).